Here is a 566-residue protein sequence, read N- to C-terminus: MSDSTGYAVNDLVWAKMKGFSPWPGRISVPPAELRKIAVKKNNPVKCIFFFGSNNYAWIEETQIKPYLQFKDTHLNSSKSAQFKEALKQIEEFRVNPEKFQPLFVGENEAANRPDPDEEFNRLREGVASGTEESGAEDGASVNNTTTPAVLESVDEATSTPMVKKSAKKKVRASLPIKLNVDKVVCESIITFQCSPRSVGNKAKAMLDDGVSGAPSPKRKKKLLNDSGELSSLDASPVRRNAPVTHLLNRPVTVTRPETPEIDMSSVSNAVQSRNIKASQLKFGFLGLGVMGCGIVKNLIKSGHSVVVWNRSAHKCRKFQEVGAEVADTPSDVVEMTDVTYSCVSDPQVAKDMVFGNCGVMSANLAGKGYVEMTGVDPETSNDINEAIISKGGRYLEAQIQGSKNQAEEGTLIILASGDRLLFEECQSCFEAISRNSFYLGDVGNATKMNLILQMISGITLAGVAEAMALADRAGLQQKDVLEVLELTNMSSEMMLQKGNAIIKGEFPTHHALKHMQKDLKLALSLADGLEQSLPITAASNEVYKHAKRLGYGSHDASAVYVRARF.

Residues 9–70 (VNDLVWAKMK…ETQIKPYLQF (62 aa)) form the PWWP domain. Disordered regions lie at residues 127 to 147 (VASG…NTTT) and 206 to 234 (MLDD…SSLD). The tract at residues 274 to 566 (RNIKASQLKF…ASAVYVRARF (293 aa)) is dehydrogenase domain. Residues 284–298 (GFLG…IVKN) and Lys518 each bind NAD(+).

Belongs to the HIBADH-related family. NP60 subfamily. Binds to mononucleosomes. Interacts with male-specific lethal (MSL) histone acetyltransferase complex at least composed of mof, msl-1, msl-2 and msl-3.

The protein localises to the chromosome. Its function is as follows. May have oxidoreductase activity. In Anopheles gambiae (African malaria mosquito), this protein is Cytokine-like nuclear factor N-PAC.